The sequence spans 440 residues: D-serine dehydratase (440 aa).

Lys-116 carries the post-translational modification N6-(pyridoxal phosphate)lysine.

The protein belongs to the serine/threonine dehydratase family. DsdA subfamily. In terms of assembly, monomer. Pyridoxal 5'-phosphate is required as a cofactor.

The catalysed reaction is D-serine = pyruvate + NH4(+). In Salmonella choleraesuis (strain SC-B67), this protein is D-serine dehydratase.